The sequence spans 497 residues: Guanosine-5'-triphosphate,3'-diphosphate pyrophosphatase (497 aa).

Belongs to the GppA/Ppx family. GppA subfamily.

The enzyme catalyses guanosine 3'-diphosphate 5'-triphosphate + H2O = guanosine 3',5'-bis(diphosphate) + phosphate + H(+). It functions in the pathway purine metabolism; ppGpp biosynthesis; ppGpp from GTP: step 2/2. In terms of biological role, catalyzes the conversion of pppGpp to ppGpp. Guanosine pentaphosphate (pppGpp) is a cytoplasmic signaling molecule which together with ppGpp controls the 'stringent response', an adaptive process that allows bacteria to respond to amino acid starvation, resulting in the coordinated regulation of numerous cellular activities. In Vibrio atlanticus (strain LGP32) (Vibrio splendidus (strain Mel32)), this protein is Guanosine-5'-triphosphate,3'-diphosphate pyrophosphatase.